A 424-amino-acid polypeptide reads, in one-letter code: Histidine--tRNA ligase (424 aa).

The protein belongs to the class-II aminoacyl-tRNA synthetase family. Homodimer.

The protein resides in the cytoplasm. It catalyses the reaction tRNA(His) + L-histidine + ATP = L-histidyl-tRNA(His) + AMP + diphosphate + H(+). The polypeptide is Histidine--tRNA ligase (Salmonella arizonae (strain ATCC BAA-731 / CDC346-86 / RSK2980)).